The primary structure comprises 371 residues: Dihydroorotate dehydrogenase (quinone) (371 aa).

FMN-binding positions include 79 to 83 (AGFDK) and threonine 103. Lysine 83 is a substrate binding site. Residue 128-132 (NRMGF) participates in substrate binding. Residues asparagine 156 and asparagine 189 each contribute to the FMN site. Asparagine 189 lines the substrate pocket. The Nucleophile role is filled by serine 192. Residue asparagine 194 participates in substrate binding. 2 residues coordinate FMN: lysine 225 and threonine 253. A substrate-binding site is contributed by 254 to 255 (NT). FMN-binding positions include glycine 279, glycine 308, and 329–330 (YT).

This sequence belongs to the dihydroorotate dehydrogenase family. Type 2 subfamily. As to quaternary structure, monomer. Requires FMN as cofactor.

Its subcellular location is the cell membrane. It carries out the reaction (S)-dihydroorotate + a quinone = orotate + a quinol. It participates in pyrimidine metabolism; UMP biosynthesis via de novo pathway; orotate from (S)-dihydroorotate (quinone route): step 1/1. In terms of biological role, catalyzes the conversion of dihydroorotate to orotate with quinone as electron acceptor. The protein is Dihydroorotate dehydrogenase (quinone) of Corynebacterium glutamicum (strain ATCC 13032 / DSM 20300 / JCM 1318 / BCRC 11384 / CCUG 27702 / LMG 3730 / NBRC 12168 / NCIMB 10025 / NRRL B-2784 / 534).